A 325-amino-acid chain; its full sequence is Tagatose 1,6-diphosphate aldolase 1 (325 aa).

It belongs to the aldolase LacD family.

It catalyses the reaction D-tagatofuranose 1,6-bisphosphate = D-glyceraldehyde 3-phosphate + dihydroxyacetone phosphate. Its pathway is carbohydrate metabolism; D-tagatose 6-phosphate degradation; D-glyceraldehyde 3-phosphate and glycerone phosphate from D-tagatose 6-phosphate: step 2/2. The sequence is that of Tagatose 1,6-diphosphate aldolase 1 (lacD1) from Streptococcus mutans serotype c (strain ATCC 700610 / UA159).